A 478-amino-acid chain; its full sequence is MPPMPSAPPVHPPPDGGWGWIVVGAAFISIGFSYAFPKAVTVFFKEIQQIFHTTYSEIAWISSIMLAVMYAGGPVSSVLVNKYGSRPVVIAGGLLCCLGMVLASFSSSVVQLYLTMGFITGLGLAFNLQPALTIIGKYFYRKRPMANGLAMAGSPVFLSSLAPFNQYLFNTFGWKGSFLILGSLLLNACVAGSLMRPLGPNQTTSKSKNKTGKTEDDSSPKKIKTKKSTWEKVNKYLDFSLFKHRGFLIYLSGNVIMFLGFFAPIIFLAPYAKDQGIDEYSAAFLLSVMAFVDMFARPSVGLIANSKYIRPRIQYFFSFAIMFNGVCHLLCPLAQDYTSLVLYAVFFGLGFGSVSSVLFETLMDLVGAPRFSSAVGLVTIVECGPVLLGPPLAGKLVDLTGEYKYMYMSCGAIVVAASVWLLIGNAINYRLLAKERKEENARQKTRESEPLSKSKHSEDVNVKVSNAQSVTSERETNI.

Over 1–15 (MPPMPSAPPVHPPPD) the chain is Cytoplasmic. Residues 16-36 (GGWGWIVVGAAFISIGFSYAF) traverse the membrane as a helical segment. Residues 37-59 (PKAVTVFFKEIQQIFHTTYSEIA) are Extracellular-facing. Residues 60–80 (WISSIMLAVMYAGGPVSSVLV) form a helical membrane-spanning segment. The Cytoplasmic segment spans residues 81–89 (NKYGSRPVV). A helical transmembrane segment spans residues 90-110 (IAGGLLCCLGMVLASFSSSVV). Residues 111-115 (QLYLT) lie on the Extracellular side of the membrane. Residues 116–136 (MGFITGLGLAFNLQPALTIIG) form a helical membrane-spanning segment. Residues 137-148 (KYFYRKRPMANG) are Cytoplasmic-facing. The chain crosses the membrane as a helical span at residues 149-169 (LAMAGSPVFLSSLAPFNQYLF). The Extracellular portion of the chain corresponds to 170–173 (NTFG). Residues 174 to 194 (WKGSFLILGSLLLNACVAGSL) form a helical membrane-spanning segment. Residues 195 to 246 (MRPLGPNQTTSKSKNKTGKTEDDSSPKKIKTKKSTWEKVNKYLDFSLFKHRG) lie on the Cytoplasmic side of the membrane. A disordered region spans residues 200–224 (PNQTTSKSKNKTGKTEDDSSPKKIK). Residues 247–267 (FLIYLSGNVIMFLGFFAPIIF) form a helical membrane-spanning segment. Residues 268–282 (LAPYAKDQGIDEYSA) lie on the Extracellular side of the membrane. A helical membrane pass occupies residues 283-303 (AFLLSVMAFVDMFARPSVGLI). Residues 304 to 312 (ANSKYIRPR) are Cytoplasmic-facing. The helical transmembrane segment at 313–333 (IQYFFSFAIMFNGVCHLLCPL) threads the bilayer. The Extracellular segment spans residues 334–338 (AQDYT). A helical transmembrane segment spans residues 339-359 (SLVLYAVFFGLGFGSVSSVLF). The Cytoplasmic portion of the chain corresponds to 360 to 373 (ETLMDLVGAPRFSS). Residues 374-394 (AVGLVTIVECGPVLLGPPLAG) form a helical membrane-spanning segment. Topologically, residues 395–406 (KLVDLTGEYKYM) are extracellular. A helical transmembrane segment spans residues 407–427 (YMSCGAIVVAASVWLLIGNAI). Over 428–478 (NYRLLAKERKEENARQKTRESEPLSKSKHSEDVNVKVSNAQSVTSERETNI) the chain is Cytoplasmic. Residues 437–461 (KEENARQKTRESEPLSKSKHSEDVN) show a composition bias toward basic and acidic residues. The segment at 437-478 (KEENARQKTRESEPLSKSKHSEDVNVKVSNAQSVTSERETNI) is disordered.

Belongs to the major facilitator superfamily. Monocarboxylate porter (TC 2.A.1.13) family. Homodimer. Interacts with GRID2IP. Interacts with EMB; interaction mediates SLC16A7 targeting to the plasma membrane. Interacts with isoform 2 of BSG. As to expression, detected in heart and in blood lymphocytes and monocytes (at protein level). High expression in testis, moderate to low in spleen, heart, kidney, pancreas, skeletal muscle, brain and leukocyte. Restricted expression in normal tissues, but widely expressed in cancer cells.

It localises to the cell membrane. The protein resides in the basolateral cell membrane. The protein localises to the cytoplasm. The catalysed reaction is pyruvate(out) + H(+)(out) = pyruvate(in) + H(+)(in). It catalyses the reaction 3-methyl-2-oxobutanoate(out) + H(+)(out) = 3-methyl-2-oxobutanoate(in) + H(+)(in). It carries out the reaction (S)-lactate(in) + H(+)(in) = (S)-lactate(out) + H(+)(out). The enzyme catalyses acetoacetate(out) + H(+)(out) = acetoacetate(in) + H(+)(in). The catalysed reaction is (R)-3-hydroxybutanoate(out) + H(+)(out) = (R)-3-hydroxybutanoate(in) + H(+)(in). It catalyses the reaction 4-methyl-2-oxopentanoate(out) + H(+)(out) = 4-methyl-2-oxopentanoate(in) + H(+)(in). It carries out the reaction (S)-3-hydroxybutanoate(out) + H(+)(out) = (S)-3-hydroxybutanoate(in) + H(+)(in). Its activity is regulated as follows. Transport activity exhibits steep dependence on substrate concentration. Substrate concentration sensitivity of SLC16A7 arises from the strong inter-subunit cooperativity of the SLC16A7 dimer during transport. Inhibited by AR-C155858. Its function is as follows. Proton-coupled monocarboxylate symporter. Catalyzes the rapid transport across the plasma membrane of monocarboxylates such as L-lactate, pyruvate and ketone bodies, acetoacetate, beta-hydroxybutyrate and acetate. Dimerization is functionally required and both subunits work cooperatively in transporting substrate. This Homo sapiens (Human) protein is Monocarboxylate transporter 2.